A 294-amino-acid chain; its full sequence is MEQYEKVEKIGEGTYGVVYKARDRATNETIALKKIRLEQEDEGVPSTAIREISLLKEMQHRNIVRLQDVVHSEKRLYLVFEYLDLDLKKFMDSSPEFAKDQRQIKMFLYQILCGIAYCHSHRVLHRDLKPQNLLIDRSSNAVKLADFGLARAFGIPVRTFTHEVVTLWYRAPEILLGSRHYSTPVDVWSVGCIFAEMINQRPLFPGDSEIDELFKIFRITGTPNEETWPGVTSLPDFKSAFPKWPAKDLATQVPNLEPAGLDLLSSTCRLDPTRRITARGALEHEYFKDIKFVP.

The Protein kinase domain occupies 4-287 (YEKVEKIGEG…ARGALEHEYF (284 aa)). Residues 10-18 (IGEGTYGVV) and lysine 33 each bind ATP. Position 14 is a phosphothreonine (threonine 14). Tyrosine 15 is modified (phosphotyrosine). The Proton acceptor role is filled by aspartate 127. Threonine 161 carries the phosphothreonine; by CAK modification.

The protein belongs to the protein kinase superfamily. CMGC Ser/Thr protein kinase family. CDC2/CDKX subfamily. In terms of tissue distribution, found in most organs including root, young leaf, stem, vegetative meristem and flower bud.

It catalyses the reaction L-seryl-[protein] + ATP = O-phospho-L-seryl-[protein] + ADP + H(+). The enzyme catalyses L-threonyl-[protein] + ATP = O-phospho-L-threonyl-[protein] + ADP + H(+). Its activity is regulated as follows. Phosphorylation at Thr-14 or Tyr-15 inactivates the enzyme, while phosphorylation at Thr-161 activates it. In terms of biological role, plays a key role in the control of the eukaryotic cell cycle. Component of the kinase complex that phosphorylates the repetitive C-terminus of RNA polymerase II. The protein is Cell division control protein 2 homolog 2 (CDC2B) of Medicago sativa (Alfalfa).